Consider the following 66-residue polypeptide: COP-associated protein (66 aa).

Positions 1–66 constitute an HMA domain; the sequence is MKATFQVPSI…ALLDAGQEVV (66 aa). Residues Cys12 and Cys15 each coordinate Cu cation. Cys12 and Cys15 form a disulfide bridge.

Part of a cation-transporting system which is associated with copper export out of the H.pylori cells. The chain is COP-associated protein (copP) from Helicobacter pylori (strain ATCC 700392 / 26695) (Campylobacter pylori).